Here is a 515-residue protein sequence, read N- to C-terminus: 3,4-dehydroadipyl-CoA semialdehyde dehydrogenase (515 aa).

Catalysis depends on residues glutamate 255 and cysteine 294. The segment at 470 to 515 (VMPTCLHGGPRARRRRRGVGRSARAGDVSPPLRRAGRPRGAGSPVA) is disordered. The segment covering 479 to 488 (PRARRRRRGV) has biased composition (basic residues). Positions 489 to 515 (GRSARAGDVSPPLRRAGRPRGAGSPVA) are enriched in low complexity.

This sequence belongs to the aldehyde dehydrogenase family. Homodimer.

The catalysed reaction is (3Z)-6-oxohex-3-enoyl-CoA + NADP(+) + H2O = cis-3,4-dehydroadipyl-CoA + NADPH + 2 H(+). Functionally, catalyzes the NADP-dependent oxidation of 3,4-dehydroadipyl-CoA semialdehyde to form cis-3,4-dehydroadipyl-CoA. The chain is 3,4-dehydroadipyl-CoA semialdehyde dehydrogenase (boxD) from Aromatoleum evansii (Azoarcus evansii).